Reading from the N-terminus, the 328-residue chain is DNA-directed RNA polymerase subunit alpha 2 (328 aa).

The interval 1 to 234 (MQGSVIEFLK…EQLDAFVDLR (234 aa)) is alpha N-terminal domain (alpha-NTD). Positions 248–328 (FDPILLRPVD…NWPPASLSED (81 aa)) are alpha C-terminal domain (alpha-CTD).

This sequence belongs to the RNA polymerase alpha chain family. As to quaternary structure, homodimer. The RNAP catalytic core consists of 2 alpha, 1 beta, 1 beta' and 1 omega subunit. When a sigma factor is associated with the core the holoenzyme is formed, which can initiate transcription.

The enzyme catalyses RNA(n) + a ribonucleoside 5'-triphosphate = RNA(n+1) + diphosphate. Functionally, DNA-dependent RNA polymerase catalyzes the transcription of DNA into RNA using the four ribonucleoside triphosphates as substrates. The chain is DNA-directed RNA polymerase subunit alpha 2 from Psychromonas ingrahamii (strain DSM 17664 / CCUG 51855 / 37).